A 240-amino-acid chain; its full sequence is Uridylate kinase (240 aa).

13–16 (KASG) contacts ATP. Glycine 55 serves as a coordination point for UMP. ATP-binding residues include glycine 56 and arginine 60. UMP contacts are provided by residues aspartate 75 and 136 to 143 (TGNPFFTT). ATP is bound by residues threonine 163, glutamine 164, tyrosine 169, and aspartate 172.

The protein belongs to the UMP kinase family. As to quaternary structure, homohexamer.

The protein localises to the cytoplasm. The catalysed reaction is UMP + ATP = UDP + ADP. The protein operates within pyrimidine metabolism; CTP biosynthesis via de novo pathway; UDP from UMP (UMPK route): step 1/1. Its activity is regulated as follows. Inhibited by UTP. Functionally, catalyzes the reversible phosphorylation of UMP to UDP. This Mesorhizobium japonicum (strain LMG 29417 / CECT 9101 / MAFF 303099) (Mesorhizobium loti (strain MAFF 303099)) protein is Uridylate kinase.